The sequence spans 401 residues: Multidrug resistance protein MdtH (401 aa).

Residues 1–12 (MSRVSQARNLGK) lie on the Cytoplasmic side of the membrane. The chain crosses the membrane as a helical span at residues 13–33 (YFLLIDNMLVVLGFFVVFPLV). Over 34-98 (SIRFVDQMGW…GFATMGIAHE (65 aa)) the chain is Periplasmic. A helical membrane pass occupies residues 99–116 (PWLLWFSCLLSGLGGTLF). The Cytoplasmic segment spans residues 117-137 (DPPRSALVVKLMPQQRGRFFS). The helical transmembrane segment at 138–158 (LLMMQDSAGAVIGALLGSWLL) threads the bilayer. Residues 159–163 (QYDFR) lie on the Periplasmic side of the membrane. The chain crosses the membrane as a helical span at residues 164-184 (LVCATGAVLFVLCAAFNAWLL). Residues 185–212 (PAWKLSTIRTPVREGMTRVMRDKRFVTY) lie on the Cytoplasmic side of the membrane. Residues 213 to 233 (VLTLAGYYMLAVQVMLMLPIM) traverse the membrane as a helical segment. At 234 to 242 (VNDVAGAPS) the chain is on the periplasmic side. The helical transmembrane segment at 243-263 (AVKWMYAIEACLSLTLLYPIA) threads the bilayer. The Cytoplasmic segment spans residues 264 to 275 (RWSEKHFRLEHR). The chain crosses the membrane as a helical span at residues 276-296 (LMAGLLIMSLSMMPVGMVSGL). Over 297–298 (QQ) the chain is Periplasmic. Residues 299–319 (LFTLICLFYIGSIIAEPARET) form a helical membrane-spanning segment. Residues 320–338 (LSASLADARARGSYMGFSR) are Cytoplasmic-facing. Residues 339–359 (LGLAIGGTIGYIGGGWLFDLG) form a helical membrane-spanning segment. Residues 360–366 (KSAHQPE) lie on the Periplasmic side of the membrane. A helical transmembrane segment spans residues 367-387 (LPWMMLGIIGIFTFLALGWQF). At 388 to 401 (SQKRAARRLLERDA) the chain is on the cytoplasmic side.

It belongs to the major facilitator superfamily. DHA1 family. MdtH (TC 2.A.1.2.21) subfamily.

Its subcellular location is the cell inner membrane. This chain is Multidrug resistance protein MdtH, found in Shigella dysenteriae serotype 1 (strain Sd197).